The primary structure comprises 288 residues: Leucine-rich repeat-containing protein 72 (288 aa).

LRR repeat units follow at residues 47 to 68 (DVFELFLSQKELTEVIDLSRFK), 69 to 90 (KLKYLWLHHNKLHGITFLTRNY), 91 to 112 (CLAELYLNNNAIFDIEGLHYLP), and 113 to 134 (SLHILLLHHNELINLDATVKEL). One can recognise an LRRCT domain in the interval 148–186 (NPLCQYNLYRLYIIYHLPGVELLDRNQVTEKERRSMITL).

This chain is Leucine-rich repeat-containing protein 72 (LRRC72), found in Bos taurus (Bovine).